A 320-amino-acid polypeptide reads, in one-letter code: Ribose-phosphate pyrophosphokinase 1 (320 aa).

ATP-binding positions include 39–41 (DGE) and 98–99 (RQ). The Mg(2+) site is built by His132 and Asp173. Residue Lys196 is part of the active site. Residues Arg198, Asp224, and 228–232 (DTAGT) contribute to the D-ribose 5-phosphate site.

The protein belongs to the ribose-phosphate pyrophosphokinase family. Class I subfamily. Homohexamer. The cofactor is Mg(2+).

Its subcellular location is the cytoplasm. It carries out the reaction D-ribose 5-phosphate + ATP = 5-phospho-alpha-D-ribose 1-diphosphate + AMP + H(+). It participates in metabolic intermediate biosynthesis; 5-phospho-alpha-D-ribose 1-diphosphate biosynthesis; 5-phospho-alpha-D-ribose 1-diphosphate from D-ribose 5-phosphate (route I): step 1/1. Its function is as follows. Involved in the biosynthesis of the central metabolite phospho-alpha-D-ribosyl-1-pyrophosphate (PRPP) via the transfer of pyrophosphoryl group from ATP to 1-hydroxyl of ribose-5-phosphate (Rib-5-P). This Streptococcus pyogenes serotype M1 protein is Ribose-phosphate pyrophosphokinase 1.